Reading from the N-terminus, the 305-residue chain is Acetyl-coenzyme A carboxylase carboxyl transferase subunit alpha (305 aa).

Residues 33 to 280 (AKLESSTALS…KEQILKDLAD (248 aa)) enclose the CoA carboxyltransferase C-terminal domain.

Belongs to the AccA family. As to quaternary structure, acetyl-CoA carboxylase is a heterohexamer composed of biotin carboxyl carrier protein (AccB), biotin carboxylase (AccC) and two subunits each of ACCase subunit alpha (AccA) and ACCase subunit beta (AccD).

The protein localises to the cytoplasm. The enzyme catalyses N(6)-carboxybiotinyl-L-lysyl-[protein] + acetyl-CoA = N(6)-biotinyl-L-lysyl-[protein] + malonyl-CoA. It participates in lipid metabolism; malonyl-CoA biosynthesis; malonyl-CoA from acetyl-CoA: step 1/1. Functionally, component of the acetyl coenzyme A carboxylase (ACC) complex. First, biotin carboxylase catalyzes the carboxylation of biotin on its carrier protein (BCCP) and then the CO(2) group is transferred by the carboxyltransferase to acetyl-CoA to form malonyl-CoA. This is Acetyl-coenzyme A carboxylase carboxyl transferase subunit alpha from Treponema denticola (strain ATCC 35405 / DSM 14222 / CIP 103919 / JCM 8153 / KCTC 15104).